Consider the following 61-residue polypeptide: uncharacterized protein (61 aa).

This is an uncharacterized protein from Escherichia coli O6:K15:H31 (strain 536 / UPEC).